The chain runs to 342 residues: Transmembrane protein 115 homolog (342 aa).

At 1-21 (MQYSSRFLELNIPDSFLNINK) the chain is on the cytoplasmic side. A helical transmembrane segment spans residues 22-42 (IPDATKFITVTYICLTATLFC). Residues 43-121 (IRRSLYNKLV…NWNSSKEMFK (79 aa)) lie on the Lumenal side of the membrane. N-linked (GlcNAc...) asparagine glycosylation is present at asparagine 114. Residues 122 to 142 (FIIVLGSLTNVLIIMLTLLVS) traverse the membrane as a helical segment. The Cytoplasmic segment spans residues 143-159 (FFSNKVRLDIPLDGNYT). Residues 160-180 (ILIGFPIIYRQLLPETTIIHL) traverse the membrane as a helical segment. Over 181 to 207 (KTPQFLAKNFRFKLLPIFVMFTMTVTQ) the chain is Lumenal. A helical membrane pass occupies residues 208–228 (IIWFHHFAQLFSIWVTFFASW). The Cytoplasmic portion of the chain corresponds to 229 to 342 (SYLRFFQKLA…QVLEERMVNP (114 aa)).

The protein belongs to the TMEM115 family. As to quaternary structure, homooligomer.

Its subcellular location is the golgi apparatus membrane. In terms of biological role, may play a role in retrograde transport of proteins from the Golgi to the endoplasmic reticulum. The chain is Transmembrane protein 115 homolog from Saccharomyces cerevisiae (strain ATCC 204508 / S288c) (Baker's yeast).